The following is a 110-amino-acid chain: Large ribosomal subunit protein uL22 (110 aa).

Belongs to the universal ribosomal protein uL22 family. In terms of assembly, part of the 50S ribosomal subunit.

In terms of biological role, this protein binds specifically to 23S rRNA; its binding is stimulated by other ribosomal proteins, e.g. L4, L17, and L20. It is important during the early stages of 50S assembly. It makes multiple contacts with different domains of the 23S rRNA in the assembled 50S subunit and ribosome. Functionally, the globular domain of the protein is located near the polypeptide exit tunnel on the outside of the subunit, while an extended beta-hairpin is found that lines the wall of the exit tunnel in the center of the 70S ribosome. The chain is Large ribosomal subunit protein uL22 from Oleidesulfovibrio alaskensis (strain ATCC BAA-1058 / DSM 17464 / G20) (Desulfovibrio alaskensis).